The chain runs to 1405 residues: DNA-directed RNA polymerase subunit beta' (1405 aa).

Zn(2+) is bound by residues cysteine 70, cysteine 72, cysteine 85, and cysteine 88. Aspartate 460, aspartate 462, and aspartate 464 together coordinate Mg(2+). Residues cysteine 814, cysteine 888, cysteine 895, and cysteine 898 each coordinate Zn(2+).

The protein belongs to the RNA polymerase beta' chain family. In terms of assembly, the RNAP catalytic core consists of 2 alpha, 1 beta, 1 beta' and 1 omega subunit. When a sigma factor is associated with the core the holoenzyme is formed, which can initiate transcription. It depends on Mg(2+) as a cofactor. Requires Zn(2+) as cofactor.

The enzyme catalyses RNA(n) + a ribonucleoside 5'-triphosphate = RNA(n+1) + diphosphate. Functionally, DNA-dependent RNA polymerase catalyzes the transcription of DNA into RNA using the four ribonucleoside triphosphates as substrates. This chain is DNA-directed RNA polymerase subunit beta', found in Shewanella putrefaciens (strain CN-32 / ATCC BAA-453).